The chain runs to 459 residues: UDP-N-acetylglucosamine 1-carboxyvinyltransferase (459 aa).

Residue 40 to 41 (KN) participates in phosphoenolpyruvate binding. UDP-N-acetyl-alpha-D-glucosamine is bound at residue R111. Residue C135 is the Proton donor of the active site. C135 is subject to 2-(S-cysteinyl)pyruvic acid O-phosphothioketal. UDP-N-acetyl-alpha-D-glucosamine-binding positions include 140-144 (RPVDL), D324, and V346. The segment at 437–459 (PSAPPSEVSSAVAAGPDAAAAPV) is disordered. The span at 441 to 459 (PSEVSSAVAAGPDAAAAPV) shows a compositional bias: low complexity.

The protein belongs to the EPSP synthase family. MurA subfamily.

The protein localises to the cytoplasm. The catalysed reaction is phosphoenolpyruvate + UDP-N-acetyl-alpha-D-glucosamine = UDP-N-acetyl-3-O-(1-carboxyvinyl)-alpha-D-glucosamine + phosphate. It participates in cell wall biogenesis; peptidoglycan biosynthesis. Its function is as follows. Cell wall formation. Adds enolpyruvyl to UDP-N-acetylglucosamine. This chain is UDP-N-acetylglucosamine 1-carboxyvinyltransferase, found in Gloeobacter violaceus (strain ATCC 29082 / PCC 7421).